The chain runs to 449 residues: SWI/SNF chromatin-remodeling accessory subunit 2 (449 aa).

Residues 1 to 11 (MHSQQRPNPQM) show a composition bias toward polar residues. The disordered stretch occupies residues 1–56 (MHSQQRPNPQMNRHPYGTPGSAPQMRRPGGFAGQPPQMHGPRMVAPPAAPLPKKKK). An SWIB/MDM2 domain is found at 223 to 300 (NHPAKFKLHP…PNKLHQLLQQ (78 aa)).

This sequence belongs to the SMARCD family. Component of the multiprotein chromatin-remodeling complexes SWI/SNF: SWI/SNF-A (BAF), SWI/SNF-B (PBAF) and related complexes. The canonical complex contains a catalytic subunit swsn-4, core subunits swsn-1 and swsn-5, and accessory subunits swsn-3, swsn-6, phf-10, dpff-1, swsn-9 and either ham-3/swsn-2.1 or swsn-2.2.

Its subcellular location is the nucleus. The protein localises to the nucleoplasm. The protein resides in the chromosome. It localises to the nucleus envelope. Involved in transcriptional activation and repression of select genes by chromatin remodeling (alteration of DNA-nucleosome topology). Component of SWI/SNF chromatin remodeling complexes that carry out key enzymatic activities, changing chromatin structure by altering DNA-histone contacts within a nucleosome in an ATP-dependent manner. Probably regulates vulva development through the let-60/Ras pathway. Involved in nuclear reassembly after mitosis and recruitment of nuclear envelope protein, mel-28, to the nuclear periphery in the early embryo and in the adult germline. Involved in gonadogenesis. This is SWI/SNF chromatin-remodeling accessory subunit 2 from Caenorhabditis elegans.